The primary structure comprises 153 residues: Large ribosomal subunit protein uL30 (153 aa).

It belongs to the universal ribosomal protein uL30 family. In terms of assembly, part of the 50S ribosomal subunit.

In Methanosarcina acetivorans (strain ATCC 35395 / DSM 2834 / JCM 12185 / C2A), this protein is Large ribosomal subunit protein uL30.